We begin with the raw amino-acid sequence, 95 residues long: Bacterial microcompartment shell protein EutM (95 aa).

In terms of domain architecture, BMC spans 6-90 (ALGMIETKGL…PHFEVDAILP (85 aa)).

It belongs to the bacterial microcompartments protein family. As to quaternary structure, homohexamer; has a positively charged pore 9 Angstroms in diameter. The hexamers pack into a two-dimensional array. May interact with EutQ.

It localises to the bacterial microcompartment. It participates in amine and polyamine degradation; ethanolamine degradation. Its function is as follows. A component of the bacterial microcompartment (BMC) shell dedicated to ethanolamine degradation. Each homohexamer has a central pore with an opening of up to 9.0 Angstroms. Expression of the eut operon may allow this bacteria to use ethanolamine as a carbon, nitrogen and energy source. The pore probably allows metabolite passage into and out of the BMC. This Clostridioides difficile (strain 630) (Peptoclostridium difficile) protein is Bacterial microcompartment shell protein EutM.